A 121-amino-acid chain; its full sequence is Large ribosomal subunit protein uL14 (121 aa).

It belongs to the universal ribosomal protein uL14 family. Part of the 50S ribosomal subunit. Forms a cluster with proteins L3 and L19. In the 70S ribosome, L14 and L19 interact and together make contacts with the 16S rRNA in bridges B5 and B8.

Its function is as follows. Binds to 23S rRNA. Forms part of two intersubunit bridges in the 70S ribosome. In Phocaeicola vulgatus (strain ATCC 8482 / DSM 1447 / JCM 5826 / CCUG 4940 / NBRC 14291 / NCTC 11154) (Bacteroides vulgatus), this protein is Large ribosomal subunit protein uL14.